Consider the following 129-residue polypeptide: M-zodatoxin-Lt8f (129 aa).

The signal sequence occupies residues Met1 to Ser20. Positions Lys21–Arg60 are excised as a propeptide. The short motif at Glu57–Arg60 is the Processing quadruplet motif element.

Cleavage of the propeptide depends on the processing quadruplet motif (XXXR, with at least one of X being E). Expressed by the venom gland.

The protein resides in the secreted. In terms of biological role, insecticidal, cytolytic and antimicrobial peptide. Has insecticidal activity against the flesh fly S.carnaria. Has antibacterial activity against the Gram-negative bacteria E.coli. Forms voltage-dependent, ion-permeable channels in membranes. At high concentration causes cell membrane lysis. This chain is M-zodatoxin-Lt8f (cit 1-7), found in Lachesana tarabaevi (Spider).